The following is a 359-amino-acid chain: Alanine racemase, biosynthetic (359 aa).

The active-site Proton acceptor; specific for D-alanine is lysine 34. Lysine 34 carries the post-translational modification N6-(pyridoxal phosphate)lysine. Arginine 129 contributes to the substrate binding site. The active-site Proton acceptor; specific for L-alanine is tyrosine 255. Methionine 303 is a binding site for substrate.

The protein belongs to the alanine racemase family. It depends on pyridoxal 5'-phosphate as a cofactor.

It catalyses the reaction L-alanine = D-alanine. The protein operates within amino-acid biosynthesis; D-alanine biosynthesis; D-alanine from L-alanine: step 1/1. Its pathway is cell wall biogenesis; peptidoglycan biosynthesis. Its function is as follows. Catalyzes the interconversion of L-alanine and D-alanine. Provides the D-alanine required for cell wall biosynthesis. The chain is Alanine racemase, biosynthetic (alr) from Escherichia coli O157:H7.